Consider the following 181-residue polypeptide: CASP-like protein 1F1 (181 aa).

At 1–18 (MPNNEAKFSVNQPLKTQK) the chain is on the cytoplasmic side. Residues 19 to 39 (LFIGVQIFFRIVAIAASVASS) traverse the membrane as a helical segment. The Extracellular segment spans residues 40–70 (WLMITSKQVIDIGGIVLDARYSYSPEFKFLA). Residues 71-91 (FTNIVVGCFSLLSLLFLVLVV) form a helical membrane-spanning segment. Residues 92–100 (RQGSNPNHY) lie on the Cytoplasmic side of the membrane. A helical transmembrane segment spans residues 101–121 (FFLFLHDLAMMSLVVGGCAAA). Topologically, residues 122-152 (TTVGFLGKHGNSHTGWMQICDNFGKFCNRAQ) are extracellular. Residues 153 to 173 (TSVTISYLNLICLSILTITSA) traverse the membrane as a helical segment. Over 174–181 (SKSRKMEA) the chain is Cytoplasmic.

The protein belongs to the Casparian strip membrane proteins (CASP) family. In terms of assembly, homodimer and heterodimers.

The protein localises to the cell membrane. The sequence is that of CASP-like protein 1F1 from Populus trichocarpa (Western balsam poplar).